The sequence spans 235 residues: UPF0173 metal-dependent hydrolase mll0680 (235 aa).

The protein belongs to the UPF0173 family.

The sequence is that of UPF0173 metal-dependent hydrolase mll0680 from Mesorhizobium japonicum (strain LMG 29417 / CECT 9101 / MAFF 303099) (Mesorhizobium loti (strain MAFF 303099)).